The primary structure comprises 2291 residues: MTTDISIVRWDPSQGPGNEYIDEYEYDGGNSSSRLFERSRIKALAEERESVQKKTFTKWVNSHLCRVNCRIADLYVDMRDGKHLIKLLEVLSGERLPKPTKGKMRIHCLENVDKALQFLREQRVHLENIGSHDIVDGNASLNLGLIWTIILRFQIQDITIEEVDNKETKSAKDALLLWCQMKTAGYHNVNVRNFTTSWRDGLAFNAIIHKHRPDLVQFEKLSKTNAIHNLNNAFDVAEDKLGLAKLLDAEDVFVEHPDEKSIITYVVTYYHYFSKLKQETVQGKRIGKVVGIAMENDKMVHDYENFTSDLLKWIETTIQSLGEREFENSLAGVQGQLAQFSNYRTIEKPPKFVEKGNLEVLLFTLQSKMRANNQKPYTPKEGKMISDINKAWERLEKAEHERELALREELIRQEKLEQLAARFDRKASMRETWLSENQRLVSQDNFGFDLAAVEAAAKKHEAIETDIFAYEERVQAVVAVCDELESERYHDVKRILLRKDNVMRLWTYLLELLRARRMRLEISLQLQQNFQEMLYILDNMEEIKQLLMTDDYGKHLMGVEDLLQKHSLVEADINILGERVKVVVQNSQKFLSDDPESYKPCDPEIIVSRVQQLEDAYAELVRLAVERRSRLEESRKLWQFYWDTADEENWIKEKEQIVSTDEVGHDLTTVNLMLSKHKALESEITSHDPQLQNVAKVGSELITEGHFGADRIKDRLKEILNKWDHLLDLTKYRRQRLENAVEYFQLFADADDVDNWMLDTLRIVSSEDVGRDEANVQSLLKKHKDVADELKNYAEVIDALHKQAESLKLNEAEKANVDKRLEAIDNRYKELTELAKLRKQRLLDALSLYKLMSEADGVEQWIKEKTKMLDTMTPGKDIEDVEIMKHRFEGFDKEMNANASRVAVVNQLARQLLHVEHPNSDEILERQNHLNQEWSTLREKAEAKMDDLKSAHGVQTFYIECRETISWIEDKKRILTETDSLEMDLTGVMTLQRRLSGMDRDLAAIQAKLSSLEREANSIEDEHPEEAKIIRERIAQIELIWEQLTQMLKERDSKLEEAGDLHRFLRDLDHFQTWLTKTQTDVASEDTPTSLPEAEKLLNQHQSIREEIDNYTEDYKNMMEYGERLTSEGSTSDDPQYMFLRERLNALKDGWEELHQMWENRQVLLSQSLDQQLFNRDARQTEVLLSQQEHFLSKDDTPVNLEQAENQLKRHEAFLTTMEANDDKINTLLQVADTLVEKDHFDADKIGKRAENITGRRDDNRQRALDQHEKLKNQVKLHEFLQDLEELAEWVQEKYATSQDESYRSAKTIHSKWTRHQAFEAEIAANKERLFEAEKSAQELSKEKPEFKDVIEPKLKELAKQFDDLEVHTKEKGAMLFDANREVLVQQTCDDIDSYITDLEKQIVSGDTANDLTSVNILMQKQQVIQTQMAVKARQVEEIDKQTEYLQKTVPEEKIEPIVVKKTAVLERFEKIKAPLLERQKALEKKKEAFQFCRDVEDEKLWIDEKLPVANSPDYGNSLFNVHVLKKKNQSLATEIDNHEPRINAICNNGRKLIDEGHEDAKKFEALISDLTQKWQELKDAIENRRKHLLESEKVQQYFFDAQEAESWMSEQELYMMVEDRGKDEISAQNLMKKHENLEQSVEDYANTIRQLGEVARQFSGDDISSGDAVAVKQSQLDKLYAGLKDLAGERRARLNEALQLFMLSREVDDLEQWITDREVVAGSQELGQDFDHVTLLSERFNEFARDTEAVGGERVAKVNGIADNLIQAGHSDSATIAEWKDNLNESWQDLLELIETRTQMLAASRELHKFFHDCKDVLGRILEKQHGVSDELGRDAGSVSTLQRKHYNFLQDLITLYSQVQQIQEESAKLQDAYAGDKAKEITNREQEVLHAWDNLQAMCDARKQKLADTGDLFRFFNMVRILMIWMEDLVRQMNTSEKPRDVSGVELLMNNHQSLKAEIDTREDNFGACISLGKELLTRNHYASADIKDRLMTLSNSRNALLRRWEERWENLQLILEVYQFARDAAVAEAWLIAQEPYLLSSELGHTIDEVENLIKKHEAFEKSAAAQEERFSALERLTTFELKEMKRRQELAEEAERQRIKEEQEAKAASEAAEQAKREAERRDDVDVGASHDDSERGGTPGAGEGHEGYVTRKHEWDSTTKKASNRSWDKVYMAAKAGRISFYKDQKGYKSNPELTFRGEPSYDLQNAAIEIASDYTKKKHVLRVKLANGALFLLQAHDDTEMSQWVTSLKAQSDSTAVAASRSQTLPATSQKDEPKRRSFFTLKKK.

The tract at residues 1–271 is actin-binding; the sequence is MTTDISIVRW…IITYVVTYYH (271 aa). Calponin-homology (CH) domains are found at residues 50–154 and 169–274; these read SVQK…LRFQ and KSAK…HYFS. 17 Spectrin repeats span residues 300-408, 420-521, 525-633, 636-739, 743-843, 848-948, 954-1057, 1060-1166, 1170-1272, 1276-1376, 1386-1484, 1488-1591, 1594-1697, 1701-1802, 1807-1909, 1913-2015, and 2020-2089; these read VHDY…ALRE, AARF…MRLE, QLQQ…RLEE, KLWQ…RLEN, YFQL…QRLL, LYKL…MDDL, VQTF…KLEE, DLHR…VLLS, DQQL…EKLK, KLHE…GAML, QQTC…KALE, EAFQ…HLLE, KVQQ…RLNE, LFML…TQML, ELHK…QKLA, DLFR…ENLQ, and VYQF…KEMK. Over residues 2097–2140 the composition is skewed to basic and acidic residues; sequence EAERQRIKEEQEAKAASEAAEQAKREAERRDDVDVGASHDDSER. The segment at 2097–2152 is disordered; the sequence is EAERQRIKEEQEAKAASEAAEQAKREAERRDDVDVGASHDDSERGGTPGAGEGHEG. One can recognise a PH domain in the interval 2147–2259; it reads GEGHEGYVTR…WVTSLKAQSD (113 aa). Phosphoserine is present on Ser-2195. A compositionally biased stretch (polar residues) spans 2262–2275; that stretch reads AVAASRSQTLPATS. Positions 2262–2291 are disordered; it reads AVAASRSQTLPATSQKDEPKRRSFFTLKKK.

It belongs to the spectrin family. Native spectrin molecule is a tetramer composed of two antiparallel heterodimers joined head to head so that each end of the native molecule includes the C-terminus of the alpha subunit and the N-terminus of the beta subunit.

The protein localises to the cytoplasm. It is found in the cytoskeleton. It localises to the cell cortex. Its function is as follows. Spectrin is the major constituent of the cytoskeletal network underlying the erythrocyte plasma membrane. It associates with band 4.1 and actin to form the cytoskeletal superstructure of the erythrocyte plasma membrane. Interacts with calmodulin in a calcium-dependent manner. In Drosophila melanogaster (Fruit fly), this protein is Spectrin beta chain (beta-Spec).